We begin with the raw amino-acid sequence, 359 residues long: Peptide chain release factor 1 (359 aa).

Residue Gln-236 is modified to N5-methylglutamine.

This sequence belongs to the prokaryotic/mitochondrial release factor family. Methylated by PrmC. Methylation increases the termination efficiency of RF1.

The protein localises to the cytoplasm. In terms of biological role, peptide chain release factor 1 directs the termination of translation in response to the peptide chain termination codons UAG and UAA. The sequence is that of Peptide chain release factor 1 from Streptococcus pneumoniae serotype 19F (strain G54).